Consider the following 419-residue polypeptide: BTB/POZ domain-containing protein KCTD20 (419 aa).

The BTB domain maps to 117-191 (EKVTLLVDGT…YKTGIINCPD (75 aa)).

Interacts with AKT1; AKT2 and AKT3. Associates with PP2CA. Part of a complex containing MARK4.

It is found in the cytoplasm. In terms of biological role, promotes the phosphorylation of AKT family members. The protein is BTB/POZ domain-containing protein KCTD20 (KCTD20) of Homo sapiens (Human).